A 74-amino-acid chain; its full sequence is Sec-independent protein translocase protein TatA (74 aa).

A helical membrane pass occupies residues M1–G21. The tract at residues E45–A74 is disordered.

The protein belongs to the TatA/E family. The Tat system comprises two distinct complexes: a TatABC complex, containing multiple copies of TatA, TatB and TatC subunits, and a separate TatA complex, containing only TatA subunits. Substrates initially bind to the TatABC complex, which probably triggers association of the separate TatA complex to form the active translocon.

The protein localises to the cell inner membrane. In terms of biological role, part of the twin-arginine translocation (Tat) system that transports large folded proteins containing a characteristic twin-arginine motif in their signal peptide across membranes. TatA could form the protein-conducting channel of the Tat system. The chain is Sec-independent protein translocase protein TatA from Actinobacillus succinogenes (strain ATCC 55618 / DSM 22257 / CCUG 43843 / 130Z).